Reading from the N-terminus, the 174-residue chain is UPF0340 protein SAR2202 (174 aa).

It belongs to the UPF0340 family.

The polypeptide is UPF0340 protein SAR2202 (Staphylococcus aureus (strain MRSA252)).